A 132-amino-acid chain; its full sequence is UPF0146 protein PF0123 (132 aa).

This sequence belongs to the UPF0146 family.

The protein is UPF0146 protein PF0123 of Pyrococcus furiosus (strain ATCC 43587 / DSM 3638 / JCM 8422 / Vc1).